We begin with the raw amino-acid sequence, 291 residues long: Neugrin (291 aa).

A signal peptide spans 1–15 (MAVTLSLLLSGRVCA). The disordered stretch occupies residues 27–49 (VADPGPIGREPDPDSDWEPEERE). Residues 39-49 (PDSDWEPEERE) are compositionally biased toward acidic residues. Serine 41 bears the Phosphoserine mark. A glycan (N-linked (GlcNAc...) asparagine) is linked at asparagine 158. The disordered stretch occupies residues 224–270 (VAAPLGHPRELQKYSSDSESPRRTGNGALPSDQKLEELKAEEPGNFS). The span at 256–265 (QKLEELKAEE) shows a compositional bias: basic and acidic residues.

It belongs to the neugrin family. Forms a regulatory protein-RNA complex, consisting of RCC1L, NGRN, RPUSD3, RPUSD4, TRUB2, FASTKD2 and 16S mt-rRNA. Interacts with 16S mt-rRNA; this interaction is direct.

The protein localises to the nucleus. The protein resides in the secreted. Its subcellular location is the mitochondrion membrane. Plays an essential role in mitochondrial ribosome biogenesis. As a component of a functional protein-RNA module, consisting of RCC1L, NGRN, RPUSD3, RPUSD4, TRUB2, FASTKD2 and 16S mitochondrial ribosomal RNA (16S mt-rRNA), controls 16S mt-rRNA abundance and is required for intra-mitochondrial translation of core subunits of the oxidative phosphorylation system. The protein is Neugrin (NGRN) of Pongo abelii (Sumatran orangutan).